A 479-amino-acid polypeptide reads, in one-letter code: ATP-dependent protease ATPase subunit HslU (479 aa).

ATP contacts are provided by residues Ile32, 74-79 (GVGKTE), Asp290, Glu355, and Arg427.

This sequence belongs to the ClpX chaperone family. HslU subfamily. As to quaternary structure, a double ring-shaped homohexamer of HslV is capped on each side by a ring-shaped HslU homohexamer. The assembly of the HslU/HslV complex is dependent on binding of ATP.

Its subcellular location is the cytoplasm. ATPase subunit of a proteasome-like degradation complex; this subunit has chaperone activity. The binding of ATP and its subsequent hydrolysis by HslU are essential for unfolding of protein substrates subsequently hydrolyzed by HslV. HslU recognizes the N-terminal part of its protein substrates and unfolds these before they are guided to HslV for hydrolysis. This is ATP-dependent protease ATPase subunit HslU from Leptospira interrogans serogroup Icterohaemorrhagiae serovar copenhageni (strain Fiocruz L1-130).